Reading from the N-terminus, the 137-residue chain is ATP synthase epsilon chain (137 aa).

It belongs to the ATPase epsilon chain family. As to quaternary structure, F-type ATPases have 2 components, CF(1) - the catalytic core - and CF(0) - the membrane proton channel. CF(1) has five subunits: alpha(3), beta(3), gamma(1), delta(1), epsilon(1). CF(0) has three main subunits: a, b and c.

The protein resides in the cell inner membrane. Its function is as follows. Produces ATP from ADP in the presence of a proton gradient across the membrane. The polypeptide is ATP synthase epsilon chain (Magnetococcus marinus (strain ATCC BAA-1437 / JCM 17883 / MC-1)).